The following is a 115-amino-acid chain: Large ribosomal subunit protein bL21 (115 aa).

It belongs to the bacterial ribosomal protein bL21 family. Part of the 50S ribosomal subunit. Contacts protein L20.

This protein binds to 23S rRNA in the presence of protein L20. The sequence is that of Large ribosomal subunit protein bL21 from Picosynechococcus sp. (strain ATCC 27264 / PCC 7002 / PR-6) (Agmenellum quadruplicatum).